The following is a 425-amino-acid chain: Probable sucrose-phosphatase 3a (425 aa).

The protein belongs to the sucrose phosphatase family. In terms of assembly, homodimer. Mg(2+) serves as cofactor.

It carries out the reaction sucrose 6(F)-phosphate + H2O = sucrose + phosphate. The protein operates within glycan biosynthesis; sucrose biosynthesis; sucrose from D-fructose 6-phosphate and UDP-alpha-D-glucose: step 2/2. Its function is as follows. Catalyzes the final step of sucrose synthesis. This chain is Probable sucrose-phosphatase 3a (SPP3A), found in Arabidopsis thaliana (Mouse-ear cress).